Here is a 332-residue protein sequence, read N- to C-terminus: L-lactate dehydrogenase A-like 6A (332 aa).

Alanine 2 bears the N-acetylalanine mark. Residues lysine 5 and lysine 57 each carry the N6-acetyllysine; alternate modification. At lysine 5 the chain carries N6-succinyllysine; alternate. Residue 29 to 57 coordinates NAD(+); sequence GSVGVACAISILLKGLSDELVLVDVDEGK. Lysine 57 participates in a covalent cross-link: Glycyl lysine isopeptide (Lys-Gly) (interchain with G-Cter in SUMO2); alternate. Lysine 81 carries the post-translational modification N6-acetyllysine. Residue arginine 99 coordinates NAD(+). Arginine 106 contributes to the substrate binding site. Residue lysine 118 is modified to N6-acetyllysine; alternate. Position 118 is an N6-succinyllysine; alternate (lysine 118). Asparagine 138 serves as a coordination point for NAD(+). Residues asparagine 138 and arginine 169 each coordinate substrate. The Proton acceptor role is filled by histidine 193. Residue lysine 232 is modified to N6-acetyllysine. The residue at position 239 (tyrosine 239) is a Phosphotyrosine. An N6-acetyllysine modification is found at lysine 243. Threonine 248 is a binding site for substrate. Threonine 309 is subject to Phosphothreonine. The residue at position 318 (lysine 318) is an N6-acetyllysine; alternate. Lysine 318 is subject to N6-succinyllysine; alternate. Threonine 322 is subject to Phosphothreonine.

This sequence belongs to the LDH/MDH superfamily. LDH family. In terms of tissue distribution, testis-specific.

Its subcellular location is the cytoplasm. It carries out the reaction (S)-lactate + NAD(+) = pyruvate + NADH + H(+). It participates in fermentation; pyruvate fermentation to lactate; (S)-lactate from pyruvate: step 1/1. Catalyzes the interconversion of L-lactate and pyruvate with nicotinamide adenine dinucleotide NAD(+) as a coenzyme. Significantly increases the transcriptional activity of JUN, when overexpressed. The sequence is that of L-lactate dehydrogenase A-like 6A (LDHAL6A) from Homo sapiens (Human).